The primary structure comprises 234 residues: Adenosine 5'-phosphosulfate reductase (234 aa).

Positions 120, 121, 203, and 206 each coordinate [4Fe-4S] cluster. Cysteine 229 functions as the Nucleophile; cysteine thiosulfonate intermediate in the catalytic mechanism.

It belongs to the PAPS reductase family. CysH subfamily. [4Fe-4S] cluster serves as cofactor.

The protein resides in the cytoplasm. It carries out the reaction [thioredoxin]-disulfide + sulfite + AMP + 2 H(+) = adenosine 5'-phosphosulfate + [thioredoxin]-dithiol. Its pathway is sulfur metabolism; hydrogen sulfide biosynthesis; sulfite from sulfate. Its function is as follows. Catalyzes the formation of sulfite from adenosine 5'-phosphosulfate (APS) using thioredoxin as an electron donor. In Bacillus cereus (strain 03BB102), this protein is Adenosine 5'-phosphosulfate reductase.